The chain runs to 120 residues: Ribosome-binding factor A (120 aa).

It belongs to the RbfA family. In terms of assembly, monomer. Binds 30S ribosomal subunits, but not 50S ribosomal subunits or 70S ribosomes.

Its subcellular location is the cytoplasm. One of several proteins that assist in the late maturation steps of the functional core of the 30S ribosomal subunit. Associates with free 30S ribosomal subunits (but not with 30S subunits that are part of 70S ribosomes or polysomes). Required for efficient processing of 16S rRNA. May interact with the 5'-terminal helix region of 16S rRNA. This chain is Ribosome-binding factor A, found in Clostridium botulinum (strain ATCC 19397 / Type A).